Consider the following 180-residue polypeptide: Large ribosomal subunit protein uL5c (180 aa).

It belongs to the universal ribosomal protein uL5 family. In terms of assembly, part of the 50S ribosomal subunit; contacts the 5S rRNA.

Its subcellular location is the plastid. It localises to the chloroplast. Its function is as follows. Binds 5S rRNA, forms part of the central protuberance of the 50S subunit. This is Large ribosomal subunit protein uL5c (rpl5) from Stigeoclonium helveticum (Green alga).